The chain runs to 94 residues: Protein FAM24B (94 aa).

Positions 1 to 21 (MPVIAGGILAALLLLIVVVLC) are cleaved as a signal peptide.

This sequence belongs to the FAM24 family.

The protein localises to the secreted. This chain is Protein FAM24B (FAM24B), found in Homo sapiens (Human).